The chain runs to 460 residues: MRITNTLTGKKEEFVPIQPGVVRMYVCGPTVYDLIHVGNARPAVVFDVFRRYLEYRGYRVIMVQNFTDIDDKIINKANQLGVDYKTVADTFIAEYWRDAHALGIRPANFHPRTTDFVDDIVEIIERLVEKGVAYQTETGVYFDVRKFEKYGELSKKKIEDLIAGARVEVDETKKFPLDFSLWKKAKPGEPCWKSPWGEGRPGWHIECTVMSVKILGESFDIHAGGEDLVFPHHENEKAQAEALTGKVFARYWMHNGMVRFLGDKMSKSTGNIFTVREAVKRYGRDGLRYMILSKHYRSPMDFSEELLQDYSRAVKRVWEILGRYEKSGDIGIPKRNAVYEEYVNRFVEALDDDFNTPVAVSLIFELARNLSKAMDDNDREDALLYYHLIRREFGPVLGLFDLNEEKKEVSSEELLKLLIEVRDVLRKEKRYDLSDRIRDHLREIGIILKDTPSGTEYTVE.

Residue Cys27 coordinates Zn(2+). Residues 29–39 carry the 'HIGH' region motif; that stretch reads PTVYDLIHVGN. Residues Cys207, His232, and Glu236 each coordinate Zn(2+). The short motif at 264-268 is the 'KMSKS' region element; sequence KMSKS. Lys267 is an ATP binding site.

It belongs to the class-I aminoacyl-tRNA synthetase family. In terms of assembly, monomer. It depends on Zn(2+) as a cofactor.

It is found in the cytoplasm. The catalysed reaction is tRNA(Cys) + L-cysteine + ATP = L-cysteinyl-tRNA(Cys) + AMP + diphosphate. This is Cysteine--tRNA ligase from Thermotoga petrophila (strain ATCC BAA-488 / DSM 13995 / JCM 10881 / RKU-1).